The chain runs to 116 residues: MANHFRTDRVGMEIKREVNEILQKKVRDPRVQGVTITDVQMLGDLSVAKVYYTILSNLASDNQKVQIGLEKATGTIKRELGRNLKLYKIPDLTFVKDESIEYGNKIDEMLRNLDKN.

The protein belongs to the RbfA family. Monomer. Binds 30S ribosomal subunits, but not 50S ribosomal subunits or 70S ribosomes.

It localises to the cytoplasm. Functionally, one of several proteins that assist in the late maturation steps of the functional core of the 30S ribosomal subunit. Associates with free 30S ribosomal subunits (but not with 30S subunits that are part of 70S ribosomes or polysomes). Required for efficient processing of 16S rRNA. May interact with the 5'-terminal helix region of 16S rRNA. This chain is Ribosome-binding factor A, found in Streptococcus pneumoniae (strain Hungary19A-6).